We begin with the raw amino-acid sequence, 87 residues long: Small ribosomal subunit protein bS18 (87 aa).

This sequence belongs to the bacterial ribosomal protein bS18 family. In terms of assembly, part of the 30S ribosomal subunit. Forms a tight heterodimer with protein bS6.

Its function is as follows. Binds as a heterodimer with protein bS6 to the central domain of the 16S rRNA, where it helps stabilize the platform of the 30S subunit. The chain is Small ribosomal subunit protein bS18 from Campylobacter hominis (strain ATCC BAA-381 / DSM 21671 / CCUG 45161 / LMG 19568 / NCTC 13146 / CH001A).